Here is a 29-residue protein sequence, read N- to C-terminus: Cytochrome b6-f complex subunit 8 (29 aa).

The chain crosses the membrane as a helical span at residues 3-23 (IISIGWVSLMVVFTFSISLVV).

The protein belongs to the PetN family. As to quaternary structure, the 4 large subunits of the cytochrome b6-f complex are cytochrome b6, subunit IV (17 kDa polypeptide, PetD), cytochrome f and the Rieske protein, while the 4 small subunits are PetG, PetL, PetM and PetN. The complex functions as a dimer.

The protein localises to the plastid. It localises to the chloroplast thylakoid membrane. Functionally, component of the cytochrome b6-f complex, which mediates electron transfer between photosystem II (PSII) and photosystem I (PSI), cyclic electron flow around PSI, and state transitions. This is Cytochrome b6-f complex subunit 8 from Staurastrum punctulatum (Green alga).